A 283-amino-acid chain; its full sequence is Non-selective voltage-gated ion channel VDAC1 (283 aa).

Residue alanine 2 is modified to N-acetylalanine. Residue lysine 12 coordinates ATP. Lysine 12 participates in a covalent cross-link: Glycyl lysine isopeptide (Lys-Gly) (interchain with G-Cter in ubiquitin). Position 13 is a phosphoserine (serine 13). The residue at position 19 (threonine 19) is a Phosphothreonine. Lysine 20 lines the ATP pocket. At lysine 20 the chain carries N6-acetyllysine; alternate. Lysine 20 carries the post-translational modification N6-succinyllysine; alternate. Lysine 20 participates in a covalent cross-link: Glycyl lysine isopeptide (Lys-Gly) (interchain with G-Cter in ubiquitin); alternate. A run of 2 beta stranded transmembrane segments spans residues 26 to 35 and 39 to 47; these read LIKLDLKTKS and LEFTSSGSA. Residues lysine 53 and lysine 61 each participate in a glycyl lysine isopeptide (Lys-Gly) (interchain with G-Cter in ubiquitin) cross-link. A beta stranded transmembrane segment spans residues 54–64; that stretch reads VTGSLETKYRW. Tyrosine 67 is modified (phosphotyrosine). The next 3 membrane-spanning stretches (beta stranded) occupy residues 69-76, 80-89, and 95-104; these read LTFTEKWN, TLGTEITVED, and LKLTFDSSFS. Position 107 is a phosphothreonine (threonine 107). Lysine 109 carries the post-translational modification N6-acetyllysine; alternate. Lysine 109 is covalently cross-linked (Glycyl lysine isopeptide (Lys-Gly) (interchain with G-Cter in ubiquitin); alternate). Lysine 110 participates in a covalent cross-link: Glycyl lysine isopeptide (Lys-Gly) (interchain with G-Cter in ubiquitin). 4 consecutive transmembrane segments (beta stranded) span residues 111–120, 123–130, 137–145, and 150–158; these read NAKIKTGYKR, INLGCDMD, SIRGALVLG, and LAGYQMNFE. Lysine 161 is covalently cross-linked (Glycyl lysine isopeptide (Lys-Gly) (interchain with G-Cter in ubiquitin)). Transmembrane regions (beta stranded) follow at residues 163-175, 178-185, 189-198, 202-211, 218-227, and 231-238; these read RVTQSNFAVGYKT, FQLHTNVN, EFGGSIYQKV, LETAVNLAWT, RFGIAAKYQI, and ACFSAKVN. A Phosphoserine; by NEK1 modification is found at serine 193. A Phosphoserine modification is found at serine 240. Residue 242 to 244 participates in NAD(+) binding; that stretch reads LIG. Residues 242–251 traverse the membrane as a beta stranded segment; it reads LIGLGYTQTL. At lysine 252 the chain carries N6-acetyllysine. The beta stranded transmembrane segment at 254-263 threads the bilayer; that stretch reads GIKLTLSALL. Residue 260 to 264 participates in NAD(+) binding; that stretch reads SALLD. Residue lysine 266 is modified to N6-acetyllysine; alternate. Residue lysine 266 forms a Glycyl lysine isopeptide (Lys-Gly) (interchain with G-Cter in ubiquitin); alternate linkage. A beta stranded transmembrane segment spans residues 273 to 282; sequence HKLGLGLEFQ. Lysine 274 is covalently cross-linked (Glycyl lysine isopeptide (Lys-Gly) (interchain with G-Cter in ubiquitin)).

The protein belongs to the eukaryotic mitochondrial porin family. In terms of assembly, homodimer and homotrimer; in response to cyclic AMP or calcium; oligomerization is required for scramblase activity. Component of the mitochondrial permeability transition pore complex (mPTPC), at least composed of SPG7, VDAC1 and PPIF. Interacts with SPG7, NIPSNAP2 and SLC25A30. Interacts with hexokinases including HK1. The HK1-VDAC1 complex interacts with ATF2. Interacts with BCL2L1. Interacts with BAK1. Interacts with RTL10/BOP (via BH3 domain). Interacts with amyloid-beta and APP; induces VDAC1 dephosphorylation. Interacts with TMEM41B. Interacts with BCAP31. Interacts with HSPA9; this interaction couples ITPR1 to VDAC1. As to quaternary structure, (Microbial infection) Interacts with influenza A virus PB1-F2 protein. Phosphorylation at Ser-193 by NEK1 promotes the closed conformational state preventing excessive mitochondrial membrane permeability and subsequent apoptotic cell death after injury. Phosphorylation by the AKT-GSK3B axis stabilizes the protein probably by preventing ubiquitin-mediated proteasomal degradation. In terms of processing, ubiquitinated. Undergoes monoubiquitination and polyubiquitination by PRKN; monoubiquitination at Lys-274 inhibits apoptosis, whereas polyubiquitination leads to its degradation and promotes mitophagy. Deubiquitinated by USP30. In terms of tissue distribution, expressed in erythrocytes (at protein level). Expressed in heart, liver and skeletal muscle.

The protein resides in the mitochondrion outer membrane. It localises to the cell membrane. Its subcellular location is the membrane raft. It catalyses the reaction chloride(in) = chloride(out). The catalysed reaction is K(+)(in) = K(+)(out). The enzyme catalyses ATP(in) = ATP(out). It carries out the reaction Ca(2+)(in) = Ca(2+)(out). It catalyses the reaction Na(+)(in) = Na(+)(out). The catalysed reaction is Mg(2+)(in) = Mg(2+)(out). The enzyme catalyses L-glutamate(out) = L-glutamate(in). It carries out the reaction dopamine(out) = dopamine(in). It catalyses the reaction acetylcholine(in) = acetylcholine(out). The catalysed reaction is Fe(III)-[cytochrome c](out) = Fe(III)-[cytochrome c](in). The enzyme catalyses a 1,2-diacyl-sn-glycero-3-phosphocholine(in) = a 1,2-diacyl-sn-glycero-3-phosphocholine(out). It carries out the reaction a 1,2-diacyl-sn-glycero-3-phospho-L-serine(in) = a 1,2-diacyl-sn-glycero-3-phospho-L-serine(out). Its activity is regulated as follows. Inhibited by nitric oxide. Its function is as follows. Non-selective voltage-gated ion channel that mediates the transport of anions and cations through the mitochondrion outer membrane and plasma membrane. The channel at the outer mitochondrial membrane allows diffusion of small hydrophilic molecules; in the plasma membrane it is involved in cell volume regulation and apoptosis. It adopts an open conformation at low or zero membrane potential and a closed conformation at potentials above 30-40 mV. The open state has a weak anion selectivity whereas the closed state is cation-selective. Binds various signaling molecules, including the sphingolipid ceramide, the phospholipid phosphatidylcholine, and the sterols cholesterol and oxysterol. In depolarized mitochondria, acts downstream of PRKN and PINK1 to promote mitophagy or prevent apoptosis; polyubiquitination by PRKN promotes mitophagy, while monoubiquitination by PRKN decreases mitochondrial calcium influx which ultimately inhibits apoptosis. May participate in the formation of the permeability transition pore complex (PTPC) responsible for the release of mitochondrial products that triggers apoptosis. May mediate ATP export from cells. Part of a complex composed of HSPA9, ITPR1 and VDAC1 that regulates mitochondrial calcium-dependent apoptosis by facilitating calcium transport from the ER lumen to the mitochondria intermembrane space thus providing calcium for the downstream calcium channel MCU that directly releases it into mitochondria matrix. Mediates cytochrome c efflux. In terms of biological role, catalyzes the scrambling of phospholipids across the outer mitochondrial membrane; the mechanism is unrelated to channel activity and is capable of translocating both anionic and zwitterionic phospholipids. This is Non-selective voltage-gated ion channel VDAC1 from Homo sapiens (Human).